We begin with the raw amino-acid sequence, 1212 residues long: Periplasmic/secreted acid trehalase ATH1 (1212 aa).

Residues 1–82 lie on the Cytoplasmic side of the membrane; the sequence is MGFKDKILFW…STRVKIRRQN (82 aa). The chain crosses the membrane as a helical span at residues 83-103; sequence ILNTTLILGMLIALVIWTAIL. Over 104–1212 the chain is Periplasmic; sequence STNSYFSSSL…ATIREIVLQE (1109 aa). N-linked (GlcNAc...) asparagine glycans are attached at residues N243, N275, N296, N362, N414, N428, and N521. 546–547 provides a ligand contact to substrate; the sequence is WD. 4 N-linked (GlcNAc...) asparagine glycosylation sites follow: N572, N601, N661, and N671. The active-site Proton donor is E677. N729 and N738 each carry an N-linked (GlcNAc...) asparagine glycan. 744–745 contributes to the substrate binding site; the sequence is KQ. N-linked (GlcNAc...) asparagine glycosylation is found at N912, N938, N993, N1011, N1033, N1052, N1070, N1097, and N1165.

It belongs to the glycosyl hydrolase 65 family. As to quaternary structure, homodimer.

It localises to the secreted. The protein resides in the periplasm. Its subcellular location is the membrane. The catalysed reaction is alpha,alpha-trehalose + H2O = alpha-D-glucose + beta-D-glucose. Functionally, periplasmic/secreted acid trehalase that catalyzes hydrolysis of the disaccharide trehalose and required for growth on trehalose as carbon source. Growth on trehalose is not restricted to respiration. The protein is Periplasmic/secreted acid trehalase ATH1 of Candida glabrata (Yeast).